Reading from the N-terminus, the 124-residue chain is Small ribosomal subunit protein uS13 (124 aa).

A disordered region spans residues 96-124 (LPVRGQRTKTNARTRKGPRRTVAGKKKAK).

This sequence belongs to the universal ribosomal protein uS13 family. In terms of assembly, part of the 30S ribosomal subunit. Forms a loose heterodimer with protein S19. Forms two bridges to the 50S subunit in the 70S ribosome.

Its function is as follows. Located at the top of the head of the 30S subunit, it contacts several helices of the 16S rRNA. In the 70S ribosome it contacts the 23S rRNA (bridge B1a) and protein L5 of the 50S subunit (bridge B1b), connecting the 2 subunits; these bridges are implicated in subunit movement. Contacts the tRNAs in the A and P-sites. In Symbiobacterium thermophilum (strain DSM 24528 / JCM 14929 / IAM 14863 / T), this protein is Small ribosomal subunit protein uS13.